The chain runs to 218 residues: Small ribosomal subunit protein uS3c (218 aa).

The KH type-2 domain occupies 47 to 118 (IRRHMRSSSN…KLNIAIVKVA (72 aa)).

Belongs to the universal ribosomal protein uS3 family. In terms of assembly, part of the 30S ribosomal subunit.

It localises to the plastid. It is found in the chloroplast. In Cycas taitungensis (Prince sago), this protein is Small ribosomal subunit protein uS3c (rps3).